A 388-amino-acid polypeptide reads, in one-letter code: Na(+)/H(+) antiporter NhaA (388 aa).

Residues 1-11 (MKHLHRFFSSD) are Cytoplasmic-facing. A helical transmembrane segment spans residues 12–31 (ASGGIILIIAAVLAMIMANS). Topologically, residues 32–58 (GATSGWYHDFLETPVQLRVGTLEINKN) are periplasmic. Residues 59-80 (MLLWINDALMAVFFLLVGLEVK) traverse the membrane as a helical segment. At 81–96 (RELMQGSLASLRQAAF) the chain is on the cytoplasmic side. Residues 97-116 (PVIAAIGGMIVPALLYLAFN) traverse the membrane as a helical segment. Over 117 to 122 (YADPIT) the chain is Periplasmic. A helical membrane pass occupies residues 123-130 (REGWAIPA). At 131–154 (ATDIAFALGVLALLGSRVPLALKI) the chain is on the cytoplasmic side. Residues 155 to 176 (FLMALAIIDDLGAIIIIALFYT) form a helical membrane-spanning segment. Over 177–180 (NDLS) the chain is Periplasmic. Residues 181–200 (MASLGVAAVAIAVLVVLNLC) traverse the membrane as a helical segment. The Cytoplasmic portion of the chain corresponds to 201–204 (GVRR). A helical membrane pass occupies residues 205–222 (TGVYILVGVVLWTAVLKS). Gly-223 is a topological domain (periplasmic). Residues 224 to 236 (VHATLAGVIVGFF) form a helical membrane-spanning segment. At 237–253 (IPLKEKHGRSPAKRLEH) the chain is on the cytoplasmic side. The helical transmembrane segment at 254-272 (VLHPWVAYLILPLFAFANA) threads the bilayer. Topologically, residues 273 to 286 (GVSLQGVTLEGLTS) are periplasmic. A helical transmembrane segment spans residues 287–310 (ILPLGIIAGLLIGKPLGISLFCWL). The Cytoplasmic portion of the chain corresponds to 311–339 (ALRLKLAHLPEGTTYQQIMAVGILCGIGF). A helical transmembrane segment spans residues 340 to 350 (TMSIFIASLAF). At 351–357 (GSVDPEL) the chain is on the periplasmic side. A helical membrane pass occupies residues 358–380 (INWAKLGILVGSISSAVIGYSWL). Over 381–388 (RVRLRPSV) the chain is Cytoplasmic.

This sequence belongs to the NhaA Na(+)/H(+) (TC 2.A.33) antiporter family.

The protein resides in the cell inner membrane. The catalysed reaction is Na(+)(in) + 2 H(+)(out) = Na(+)(out) + 2 H(+)(in). In terms of biological role, na(+)/H(+) antiporter that extrudes sodium in exchange for external protons. The chain is Na(+)/H(+) antiporter NhaA from Escherichia coli O1:K1 / APEC.